The following is a 115-amino-acid chain: uncharacterized protein (115 aa).

The next 3 helical transmembrane spans lie at 7 to 27 (TLIFFPLILQIVVTALLIWFD), 40 to 60 (YALTAFLLAAIPAFLTALLAA), and 72 to 92 (IVLVSSIISFVYCNMASYFYL).

Its subcellular location is the cell membrane. This is an uncharacterized protein from Haemophilus influenzae (strain ATCC 51907 / DSM 11121 / KW20 / Rd).